We begin with the raw amino-acid sequence, 426 residues long: Trigger factor (426 aa).

One can recognise a PPIase FKBP-type domain in the interval 166-249 (GDIVTFDFKG…IIEVKARELP (84 aa)).

The protein belongs to the FKBP-type PPIase family. Tig subfamily.

The protein resides in the cytoplasm. It carries out the reaction [protein]-peptidylproline (omega=180) = [protein]-peptidylproline (omega=0). In terms of biological role, involved in protein export. Acts as a chaperone by maintaining the newly synthesized protein in an open conformation. Functions as a peptidyl-prolyl cis-trans isomerase. This is Trigger factor from Mesoplasma florum (strain ATCC 33453 / NBRC 100688 / NCTC 11704 / L1) (Acholeplasma florum).